Reading from the N-terminus, the 71-residue chain is Conotoxin PnMEKL-032 (71 aa).

An N-terminal signal peptide occupies residues 1–19; the sequence is MQKLIILLLVAAVLMSTQA. A propeptide spanning residues 20 to 46 is cleaved from the precursor; it reads LFQEKRLKEKINFLSKEKADAEKQQKR. 3 disulfide bridges follow: Cys-48–Cys-62, Cys-55–Cys-66, and Cys-61–Cys-70.

The protein belongs to the conotoxin O2 superfamily. In terms of tissue distribution, expressed by the venom duct.

The protein localises to the secreted. The protein is Conotoxin PnMEKL-032 of Conus pennaceus (Feathered cone).